The chain runs to 289 residues: MKVLRAKSAGFCWGVERAIEITRDYAHQGRKPVYTDGPLIHNRQMMEKLSEEGIREVGDYQSRANIAVNPAAPGENPVMVVRAHGISPERRNYLKSLGMDFKDATCPDVGIIAGKIRLHAKKGYATIIFGDKNHPEAIGLLGYTEGRGYCITSKADIDALPALERVCMVSQSTMFMHEFAELSEYARQKFKEVLVFDTICQATKDRQTDVVALARQGAQAIVVIGGHHSANTVKLASLARLQNLPTYHIETAAELSPEEMKKFTVIGVTAGASTPEFLISEVCAKLEAL.

Cysteine 12 provides a ligand contact to [4Fe-4S] cluster. Positions 41 and 84 each coordinate (2E)-4-hydroxy-3-methylbut-2-enyl diphosphate. Positions 41 and 84 each coordinate dimethylallyl diphosphate. Histidine 41 and histidine 84 together coordinate isopentenyl diphosphate. Cysteine 106 contributes to the [4Fe-4S] cluster binding site. Histidine 134 is a binding site for (2E)-4-hydroxy-3-methylbut-2-enyl diphosphate. A dimethylallyl diphosphate-binding site is contributed by histidine 134. Histidine 134 serves as a coordination point for isopentenyl diphosphate. Residue glutamate 136 is the Proton donor of the active site. Serine 172 serves as a coordination point for (2E)-4-hydroxy-3-methylbut-2-enyl diphosphate. Cysteine 200 contacts [4Fe-4S] cluster. The (2E)-4-hydroxy-3-methylbut-2-enyl diphosphate site is built by serine 229, asparagine 231, and serine 273. Dimethylallyl diphosphate contacts are provided by serine 229, asparagine 231, and serine 273. Isopentenyl diphosphate-binding residues include serine 229, asparagine 231, and serine 273.

It belongs to the IspH family. It depends on [4Fe-4S] cluster as a cofactor.

The catalysed reaction is isopentenyl diphosphate + 2 oxidized [2Fe-2S]-[ferredoxin] + H2O = (2E)-4-hydroxy-3-methylbut-2-enyl diphosphate + 2 reduced [2Fe-2S]-[ferredoxin] + 2 H(+). It catalyses the reaction dimethylallyl diphosphate + 2 oxidized [2Fe-2S]-[ferredoxin] + H2O = (2E)-4-hydroxy-3-methylbut-2-enyl diphosphate + 2 reduced [2Fe-2S]-[ferredoxin] + 2 H(+). The protein operates within isoprenoid biosynthesis; dimethylallyl diphosphate biosynthesis; dimethylallyl diphosphate from (2E)-4-hydroxy-3-methylbutenyl diphosphate: step 1/1. It participates in isoprenoid biosynthesis; isopentenyl diphosphate biosynthesis via DXP pathway; isopentenyl diphosphate from 1-deoxy-D-xylulose 5-phosphate: step 6/6. Catalyzes the conversion of 1-hydroxy-2-methyl-2-(E)-butenyl 4-diphosphate (HMBPP) into a mixture of isopentenyl diphosphate (IPP) and dimethylallyl diphosphate (DMAPP). Acts in the terminal step of the DOXP/MEP pathway for isoprenoid precursor biosynthesis. This Opitutus terrae (strain DSM 11246 / JCM 15787 / PB90-1) protein is 4-hydroxy-3-methylbut-2-enyl diphosphate reductase.